The primary structure comprises 215 residues: MKIWTSEHIFNHPWETVTQAAWRKYPNPMTPSIIGTDVVERRVVDGVLHTHRLVQSKWYFPKWTHALIGTAKTCFASERSTVDPERKQMVLKTNNLTFCRNISVDEVLYYEPHPSDASKTLLKQEATVTVFGVPLSHYMEDLLTSTISTNAGKGRQGLEWVIGLINTEVKGIARGTDELLHNTRRSIDEVTESARKSMDEISAQAAKAAKAMHIT.

The PRELI/MSF1 domain occupies 1 to 170 (MKIWTSEHIF…VIGLINTEVK (170 aa)).

Belongs to the slowmo family. As to expression, expressed in specific tissues such as the developing central nervous system (CNS) and both the male and female germline. In the CNS, it is restricted in a subset of cells during embryogenesis and early larval development. In embryos, it is also expressed in salivary glands. In the testis, expressed in somatic cyst cells throughout the distal region where the mitotic cysts develop, extending through to meiotic cysts.

The protein localises to the mitochondrion. Required to regulate peristaltic movement and also for germline proliferation in males and females. The sequence is that of Protein slowmo (slmo) from Drosophila melanogaster (Fruit fly).